The following is a 188-amino-acid chain: MGSIEEVLLEERLIGYLDPGAEKVLARINRPSKIVSTSSCTGRITLIEGEAHWLRNGARVAYKTHHPISRSEVERVLRRGFTNLWLKVTGPILHLRVEGWQCAKSLLEAARRNGFKHSGVISIAEDSRLVIEIMSSQSMSVPLVMEGARIVGDDALDMLIEKANTILVESRIGLDTFSREVEELVECF.

This sequence belongs to the TYW3 family.

The catalysed reaction is 4-demethyl-7-[(3S)-3-amino-3-carboxypropyl]wyosine(37) in tRNA(Phe) + S-adenosyl-L-methionine = 7-[(3S)-3-amino-3-carboxypropyl]wyosine(37) in tRNA(Phe) + S-adenosyl-L-homocysteine + H(+). In terms of biological role, S-adenosyl-L-methionine-dependent methyltransferase that acts as a component of the wyosine derivatives biosynthesis pathway. Probably methylates N-4 position of wybutosine-86 to produce wybutosine-72. The polypeptide is tRNA(Phe) 7-((3-amino-3-carboxypropyl)-4-demethylwyosine(37)-N(4))-methyltransferase (Aeropyrum pernix (strain ATCC 700893 / DSM 11879 / JCM 9820 / NBRC 100138 / K1)).